We begin with the raw amino-acid sequence, 472 residues long: Glutamate--tRNA ligase 1 (472 aa).

A 'HIGH' region motif is present at residues 9–19; it reads PSPTGLLHVGN. Over residues 112 to 131 the composition is skewed to basic and acidic residues; that stretch reads AMAEKRPPRYDGTWRDRDPS. Positions 112-133 are disordered; that stretch reads AMAEKRPPRYDGTWRDRDPSEA. The 'KMSKS' region motif lies at 238–242; that stretch reads KLSKR. Residue K241 participates in ATP binding.

Belongs to the class-I aminoacyl-tRNA synthetase family. Glutamate--tRNA ligase type 1 subfamily. Monomer.

The protein localises to the cytoplasm. The enzyme catalyses tRNA(Glu) + L-glutamate + ATP = L-glutamyl-tRNA(Glu) + AMP + diphosphate. Functionally, catalyzes the attachment of glutamate to tRNA(Glu) in a two-step reaction: glutamate is first activated by ATP to form Glu-AMP and then transferred to the acceptor end of tRNA(Glu). This chain is Glutamate--tRNA ligase 1, found in Gluconobacter oxydans (strain 621H) (Gluconobacter suboxydans).